The sequence spans 369 residues: Cytokine receptor common subunit gamma (369 aa).

The first 22 residues, 1–22, serve as a signal peptide directing secretion; sequence MLKPSLPFTSLLFLQLPLLGVG. At 23–262 the chain is on the extracellular side; that stretch reads LNTTILTPNG…ENPFLFALEA (240 aa). N-linked (GlcNAc...) asparagine glycosylation is found at Asn24, Asn71, Asn75, and Asn84. A disulfide bridge links Cys62 with Cys72. Residues Cys102 and Cys115 are joined by a disulfide bond. One can recognise a Fibronectin type-III domain in the interval 156 to 253; sequence APENLTLHKL…IHWGSNTSKE (98 aa). Residue Asn159 is glycosylated (N-linked (GlcNAc...) asparagine). Cys182 and Cys231 are joined by a disulfide. The short motif at 237–241 is the WSXWS motif element; that stretch reads WSEWS. Residue Asn249 is glycosylated (N-linked (GlcNAc...) asparagine). A helical membrane pass occupies residues 263-283; sequence VVISVGSMGLIISLLCVYFWL. At 284-369 the chain is on the cytoplasmic side; it reads ERTMPRIPTL…PPCYTLKPET (86 aa). The Box 1 motif motif lies at 286–294; the sequence is TMPRIPTLK. The residue at position 292 (Thr292) is a Phosphothreonine.

This sequence belongs to the type I cytokine receptor family. Type 5 subfamily. As to quaternary structure, the gamma subunit is common to the IL2, IL4, IL7, IL15, IL21 and probably also the IL13 receptors. Interacts with SHB upon interleukin stimulation. Interacts with IL9. (Microbial infection) Interacts with HTLV-1 accessory protein p12I.

It localises to the cell membrane. The protein resides in the cell surface. In terms of biological role, common subunit for the receptors for a variety of interleukins. Probably in association with IL15RA, involved in the stimulation of neutrophil phagocytosis by IL15. The protein is Cytokine receptor common subunit gamma (IL2RG) of Homo sapiens (Human).